Consider the following 158-residue polypeptide: Secreted frizzled-related protein 1 (158 aa).

An FZ domain is found at 1 to 34; sequence VRDSCEPVMQFFGFYWPEMLKCDKFPEGDVCIAM. Asn-38 carries N-linked (GlcNAc...) asparagine glycosylation. Disulfide bonds link Cys-51–Cys-121 and Cys-68–Cys-123. One can recognise an NTR domain in the interval 51 to 158; the sequence is CPPCDNELKS…IHKWDKKNKE (108 aa).

The protein belongs to the secreted frizzled-related protein (sFRP) family. Interacts with WNT4, WNT1, WNT2, WNT8, MYOC and FRZD6.

Its subcellular location is the secreted. Soluble frizzled-related proteins (sFRPS) function as modulators of Wnt signaling through direct interaction with Wnts. They have a role in regulating cell growth and differentiation in specific cell types. SFRP1 decreases intracellular beta-catenin levels. Has antiproliferative effects on vascular cells, in vitro and in vivo, and can induce, in vivo, an angiogenic response. In vascular cell cycle, delays the G1 phase and entry into the S phase. In kidney development, inhibits tubule formation and bud growth in metanephroi. Inhibits WNT1/WNT4-mediated TCF-dependent transcription. This chain is Secreted frizzled-related protein 1 (Sfrp1), found in Rattus norvegicus (Rat).